A 175-amino-acid chain; its full sequence is NADH-ubiquinone oxidoreductase chain 6 (175 aa).

5 helical membrane-spanning segments follow: residues 1–21 (MMLY…VGFS), 25–45 (SPIY…GIVL), 47–67 (FGGS…MMVV), 88–108 (AVLG…YYVL), and 149–169 (YGTW…VVIM).

The protein belongs to the complex I subunit 6 family. In terms of assembly, core subunit of respiratory chain NADH dehydrogenase (Complex I) which is composed of 45 different subunits.

The protein resides in the mitochondrion inner membrane. It catalyses the reaction a ubiquinone + NADH + 5 H(+)(in) = a ubiquinol + NAD(+) + 4 H(+)(out). In terms of biological role, core subunit of the mitochondrial membrane respiratory chain NADH dehydrogenase (Complex I) which catalyzes electron transfer from NADH through the respiratory chain, using ubiquinone as an electron acceptor. Essential for the catalytic activity and assembly of complex I. The chain is NADH-ubiquinone oxidoreductase chain 6 (MT-ND6) from Bos mutus grunniens (Wild yak).